The chain runs to 406 residues: Odorant receptor 10a (406 aa).

Topologically, residues 1–45 (MSEWLRFLKRDQQLDVYFFAVPRLSLDIMGYWPGKTGDTWPWRSL) are cytoplasmic. Residues 46 to 66 (IHFAILAIGVATELHAGMCFL) traverse the membrane as a helical segment. Residues 67–74 (DRQQITLA) lie on the Extracellular side of the membrane. The chain crosses the membrane as a helical span at residues 75–95 (LETLCPAGTSAVTLLKMFLML). The Cytoplasmic segment spans residues 96-143 (RFRQDLSIMWNRLRGLLFDPNWERPEQRDIRLKHSAMAARINFWPLSA). The chain crosses the membrane as a helical span at residues 144 to 164 (GFFTCTTYNLKPILIAMILYL). At 165 to 189 (QNRYEDFVWFTPFNMTMPKVLLNYP) the chain is on the extracellular side. N-linked (GlcNAc...) asparagine glycosylation is present at asparagine 178. A helical transmembrane segment spans residues 190–210 (FFPLTYIFIAYTGYVTIFMFG). Residues 211 to 281 (GCDGFYFEFC…LTRFFRDRYT (71 aa)) are Cytoplasmic-facing. A helical transmembrane segment spans residues 282 to 302 (IITLAHFVSAAMVIGFSMVNL). Residues 303-308 (LTLGNN) lie on the Extracellular side of the membrane. The helical transmembrane segment at 309–329 (GLGAMLYVAYTVAALSQLLVY) threads the bilayer. Residues 330–372 (CYGGTLVAESSTGLCRAMFSCPWQLFKPKQRRLVQLLILRSQR) are Cytoplasmic-facing. The chain crosses the membrane as a helical span at residues 373-393 (PVSMAVPFFSPSLATFAAILQ). Topologically, residues 394 to 406 (TSGSIIALVKSFQ) are extracellular.

Belongs to the insect chemoreceptor superfamily. Heteromeric odorant receptor channel (TC 1.A.69) family. Or1a subfamily. As to quaternary structure, interacts with Orco. Complexes exist early in the endomembrane system in olfactory sensory neurons (OSNs), coupling these complexes to the conserved ciliary trafficking pathway. In terms of tissue distribution, expressed in olfactory sensory neurons in the antenna.

It localises to the cell membrane. Odorant receptor which mediates acceptance or avoidance behavior, depending on its substrates. The odorant receptor repertoire encodes a large collection of odor stimuli that vary widely in identity, intensity, and duration. May form a complex with Orco to form odorant-sensing units, providing sensitive and prolonged odorant signaling and calcium permeability. Involved in the behavioral responses to esters, and specifically to ethyl hexanoate, benzaldehyde, and acetophenone. This chain is Odorant receptor 10a (Or10a), found in Drosophila melanogaster (Fruit fly).